A 262-amino-acid chain; its full sequence is Acyl-[acyl-carrier-protein]--UDP-N-acetylglucosamine O-acyltransferase (262 aa).

It belongs to the transferase hexapeptide repeat family. LpxA subfamily. In terms of assembly, homotrimer.

It is found in the cytoplasm. It catalyses the reaction a (3R)-hydroxyacyl-[ACP] + UDP-N-acetyl-alpha-D-glucosamine = a UDP-3-O-[(3R)-3-hydroxyacyl]-N-acetyl-alpha-D-glucosamine + holo-[ACP]. The protein operates within glycolipid biosynthesis; lipid IV(A) biosynthesis; lipid IV(A) from (3R)-3-hydroxytetradecanoyl-[acyl-carrier-protein] and UDP-N-acetyl-alpha-D-glucosamine: step 1/6. Functionally, involved in the biosynthesis of lipid A, a phosphorylated glycolipid that anchors the lipopolysaccharide to the outer membrane of the cell. This Yersinia enterocolitica protein is Acyl-[acyl-carrier-protein]--UDP-N-acetylglucosamine O-acyltransferase.